Consider the following 175-residue polypeptide: Peptide deformylase (175 aa).

Positions 99 and 141 each coordinate Fe cation. Glu142 is an active-site residue. Residue His145 coordinates Fe cation.

This sequence belongs to the polypeptide deformylase family. It depends on Fe(2+) as a cofactor.

It carries out the reaction N-terminal N-formyl-L-methionyl-[peptide] + H2O = N-terminal L-methionyl-[peptide] + formate. In terms of biological role, removes the formyl group from the N-terminal Met of newly synthesized proteins. Requires at least a dipeptide for an efficient rate of reaction. N-terminal L-methionine is a prerequisite for activity but the enzyme has broad specificity at other positions. This is Peptide deformylase from Rickettsia prowazekii (strain Madrid E).